The chain runs to 268 residues: tRNA (guanine-N(1)-)-methyltransferase (268 aa).

S-adenosyl-L-methionine-binding positions include Gly113 and 133–138 (IGDYVL). Residues 238 to 268 (RCPPDPFAHQGPVYEGDQLERPEGGEQGASR) are disordered.

It belongs to the RNA methyltransferase TrmD family. As to quaternary structure, homodimer.

The protein resides in the cytoplasm. The catalysed reaction is guanosine(37) in tRNA + S-adenosyl-L-methionine = N(1)-methylguanosine(37) in tRNA + S-adenosyl-L-homocysteine + H(+). Functionally, specifically methylates guanosine-37 in various tRNAs. The protein is tRNA (guanine-N(1)-)-methyltransferase of Thermomicrobium roseum (strain ATCC 27502 / DSM 5159 / P-2).